The primary structure comprises 273 residues: MSPPPSAHTAASTATPLLDLRITRKLYGDRTILADVPLQVARGEIVCVVGPSGCGKSTLLRIVAGLDTDFRGSVKLGGIALDGPSPRAGVIFQEPRLLPWLSIADNVGFAAGPRGGREPSVARLLDEVGLAGVARQLPATLSGGMAQRAAIARGLFGEPDLLLLDEPFSAVDAITRMRLQTLLLDVVERHRTAAIVVTHDLDEALYLGDRVLMLAPNPGRIDDEIHVEVARPRDRRDPTLAVLRARLLDAFQQLQDRADETKRRTLDLQGAEA.

The ABC transporter domain maps to 17–241 (LLDLRITRKL…PRDRRDPTLA (225 aa)). 50 to 57 (GPSGCGKS) serves as a coordination point for ATP.

It belongs to the ABC transporter superfamily. Aliphatic sulfonates importer (TC 3.A.1.17.2) family. In terms of assembly, the complex is composed of two ATP-binding proteins (SsuB), two transmembrane proteins (SsuC) and a solute-binding protein (SsuA).

The protein localises to the cell inner membrane. The catalysed reaction is ATP + H2O + aliphatic sulfonate-[sulfonate-binding protein]Side 1 = ADP + phosphate + aliphatic sulfonateSide 2 + [sulfonate-binding protein]Side 1.. In terms of biological role, part of the ABC transporter complex SsuABC involved in aliphatic sulfonates import. Responsible for energy coupling to the transport system. This Burkholderia lata (strain ATCC 17760 / DSM 23089 / LMG 22485 / NCIMB 9086 / R18194 / 383) protein is Aliphatic sulfonates import ATP-binding protein SsuB 2.